The primary structure comprises 1169 residues: Translation initiation factor IF-2 (1169 aa).

Disordered regions lie at residues 69-108 (IKAKNENPKNNDNKNNKNFSNPSHPEKLSKEGLNKKPLLI) and 139-568 (ALSK…LRAA). 2 stretches are compositionally biased toward basic and acidic residues: residues 71 to 83 (AKNENPKNNDNKN) and 92 to 102 (HPEKLSKEGLN). A compositionally biased stretch (polar residues) spans 139–156 (ALSKNQNKTNTSVITTPN). Over residues 157-171 (LKDKKNPSALQDKKP) the composition is skewed to basic and acidic residues. Over residues 196 to 214 (NLANSNRNINANKINNSVN) the composition is skewed to low complexity. Over residues 231-248 (ADNNNFPKKNLNSPNVKS) the composition is skewed to polar residues. Over residues 265–281 (NTNRPNSNSRQPSSNTQ) the composition is skewed to low complexity. 3 stretches are compositionally biased toward polar residues: residues 282 to 294 (ISANRPGGQNRQG), 412 to 432 (MQLQKTNASNKEKPNISNVNK), and 439 to 455 (NQKTKAPNSRLNTSPSP). Positions 472–486 (GRTDWDDSAKLEALR) are enriched in basic and acidic residues. Residues 544-560 (KQFKKKKKETTRQRQKR) are compositionally biased toward basic residues. Residues 661–838 (KRPPVITVMG…EVEDLQANPE (178 aa)) form the tr-type G domain. A G1 region spans residues 670–677 (GHVDHGKT). 670-677 (GHVDHGKT) provides a ligand contact to GTP. The tract at residues 695 to 699 (GITQH) is G2. Positions 720 to 723 (DTPG) are G3. GTP is bound by residues 720–724 (DTPGH) and 774–777 (NKID). The interval 774-777 (NKID) is G4. The G5 stretch occupies residues 810–812 (SAI).

This sequence belongs to the TRAFAC class translation factor GTPase superfamily. Classic translation factor GTPase family. IF-2 subfamily.

It is found in the cytoplasm. One of the essential components for the initiation of protein synthesis. Protects formylmethionyl-tRNA from spontaneous hydrolysis and promotes its binding to the 30S ribosomal subunits. Also involved in the hydrolysis of GTP during the formation of the 70S ribosomal complex. This chain is Translation initiation factor IF-2, found in Prochlorococcus marinus subsp. pastoris (strain CCMP1986 / NIES-2087 / MED4).